We begin with the raw amino-acid sequence, 825 residues long: Probable inorganic carbon transporter subunit DabA (825 aa).

Cys346, Asp348, His516, and Cys531 together coordinate Zn(2+).

This sequence belongs to the inorganic carbon transporter (TC 9.A.2) DabA family. Forms a complex with DabB. Requires Zn(2+) as cofactor.

The protein localises to the cell inner membrane. Part of an energy-coupled inorganic carbon pump. The protein is Probable inorganic carbon transporter subunit DabA of Paracidovorax citrulli (strain AAC00-1) (Acidovorax citrulli).